The following is a 791-amino-acid chain: Protein Rf1, mitochondrial (791 aa).

Residues Met1–Gly27 constitute a mitochondrion transit peptide. A disordered region spans residues Met1–Ala31. A compositionally biased stretch (gly residues) spans Gln20–Gly30. PPR repeat units follow at residues Asp86–Val120, Asp121–Pro156, Asn157–Pro194, Asp195–Pro229, Asp230–Pro264, Asp265–Pro299, Asp300–Pro334, Glu335–Pro369, Asp370–Pro404, Asn405–Pro439, Gly440–Leu474, Asn475–Pro509, Asn510–Pro544, Asn545–Pro579, Asp580–Ile614, Glu615–Leu649, Glu650–Pro684, Asn685–Val719, and Asp720–Leu754.

The protein localises to the mitochondrion. Its function is as follows. Reduces the expression of the cytoplasmic male sterility (CMS)-associated mitochondrial gene ORF79, encoding a cytotoxic peptide. Can restore male fertility by blocking ORF79 production via endonucleolytic cleavage of dicistronic ATP6/ORF79 mRNA. Promotes the editing of ATP6 mRNAs independently of its cleavage function. The protein is Protein Rf1, mitochondrial (Rf1) of Oryza sativa subsp. indica (Rice).